We begin with the raw amino-acid sequence, 159 residues long: NADH-quinone oxidoreductase subunit I (159 aa).

2 consecutive 4Fe-4S ferredoxin-type domains span residues arginine 51 to aspartate 80 and threonine 90 to asparagine 119. The [4Fe-4S] cluster site is built by cysteine 60, cysteine 63, cysteine 66, cysteine 70, cysteine 99, cysteine 102, cysteine 105, and cysteine 109.

The protein belongs to the complex I 23 kDa subunit family. In terms of assembly, NDH-1 is composed of 14 different subunits. Subunits NuoA, H, J, K, L, M, N constitute the membrane sector of the complex. [4Fe-4S] cluster is required as a cofactor.

It localises to the cell inner membrane. It carries out the reaction a quinone + NADH + 5 H(+)(in) = a quinol + NAD(+) + 4 H(+)(out). In terms of biological role, NDH-1 shuttles electrons from NADH, via FMN and iron-sulfur (Fe-S) centers, to quinones in the respiratory chain. The immediate electron acceptor for the enzyme in this species is believed to be ubiquinone. Couples the redox reaction to proton translocation (for every two electrons transferred, four hydrogen ions are translocated across the cytoplasmic membrane), and thus conserves the redox energy in a proton gradient. The chain is NADH-quinone oxidoreductase subunit I from Rickettsia massiliae (strain Mtu5).